Consider the following 234-residue polypeptide: 2-hydroxy-3-keto-5-methylthiopentenyl-1-phosphate phosphatase (234 aa).

This sequence belongs to the HAD-like hydrolase superfamily. MtnX family.

It carries out the reaction 2-hydroxy-5-methylsulfanyl-3-oxopent-1-enyl phosphate + H2O = 1,2-dihydroxy-5-(methylsulfanyl)pent-1-en-3-one + phosphate. The protein operates within amino-acid biosynthesis; L-methionine biosynthesis via salvage pathway; L-methionine from S-methyl-5-thio-alpha-D-ribose 1-phosphate: step 4/6. Its function is as follows. Dephosphorylates 2-hydroxy-3-keto-5-methylthiopentenyl-1-phosphate (HK-MTPenyl-1-P) yielding 1,2-dihydroxy-3-keto-5-methylthiopentene (DHK-MTPene). The polypeptide is 2-hydroxy-3-keto-5-methylthiopentenyl-1-phosphate phosphatase (Bacillus velezensis (strain DSM 23117 / BGSC 10A6 / LMG 26770 / FZB42) (Bacillus amyloliquefaciens subsp. plantarum)).